The following is a 124-amino-acid chain: Large ribosomal subunit protein uL18 (124 aa).

It belongs to the universal ribosomal protein uL18 family. In terms of assembly, part of the 50S ribosomal subunit; part of the 5S rRNA/L5/L18/L25 subcomplex. Contacts the 5S and 23S rRNAs.

Its function is as follows. This is one of the proteins that bind and probably mediate the attachment of the 5S RNA into the large ribosomal subunit, where it forms part of the central protuberance. This chain is Large ribosomal subunit protein uL18, found in Parafrankia sp. (strain EAN1pec).